A 130-amino-acid polypeptide reads, in one-letter code: MRLANPLTLPPLTLAYLGDALYEAFVRERLLERGYVRVNDLHRHALRYVQATAQAAILHHLMPALTEQEQDVVRRGRNAKGHGAPKSADPAEYAASTGFEALVGYLYLAGQAERLSEVLQAAADFIERGQ.

Asp-19 is an active-site residue. Positions 69–91 (EQDVVRRGRNAKGHGAPKSADPA) are disordered.

Belongs to the MrnC RNase family. As to quaternary structure, homodimer. Mg(2+) is required as a cofactor.

The protein resides in the cytoplasm. In terms of biological role, involved in correct processing of both the 5' and 3' ends of 23S rRNA precursor. Processes 30S rRNA precursor transcript even in absence of ribonuclease 3 (Rnc); Rnc processes 30S rRNA into smaller rRNA precursors. This is Mini-ribonuclease 3 from Symbiobacterium thermophilum (strain DSM 24528 / JCM 14929 / IAM 14863 / T).